A 293-amino-acid chain; its full sequence is Ribosomal protein L11 methyltransferase (293 aa).

S-adenosyl-L-methionine-binding residues include threonine 145, glycine 166, aspartate 188, and asparagine 230.

The protein belongs to the methyltransferase superfamily. PrmA family.

It localises to the cytoplasm. The catalysed reaction is L-lysyl-[protein] + 3 S-adenosyl-L-methionine = N(6),N(6),N(6)-trimethyl-L-lysyl-[protein] + 3 S-adenosyl-L-homocysteine + 3 H(+). Functionally, methylates ribosomal protein L11. The sequence is that of Ribosomal protein L11 methyltransferase from Shewanella halifaxensis (strain HAW-EB4).